The chain runs to 366 residues: Mitogen-activated protein kinase 13 (366 aa).

A Protein kinase domain is found at 25 to 308 (YLAPAHVGSG…AAQALAHPFF (284 aa)). Residues 31-39 (VGSGAYGAV) and Lys-54 contribute to the ATP site. Asp-150 acts as the Proton acceptor in catalysis. Residue Thr-180 is modified to Phosphothreonine; by MAP2K3, MAP2K4, MAP2K6 and MAP2K7. The short motif at 180-182 (TGY) is the TXY element. A Phosphotyrosine modification is found at Tyr-182. Phosphoserine is present on Ser-350.

Belongs to the protein kinase superfamily. CMGC Ser/Thr protein kinase family. MAP kinase subfamily. As to quaternary structure, interacts with MAPK8IP2. Requires Mg(2+) as cofactor. Dually phosphorylated on Thr-180 and Tyr-182 by MAP2K3/MKK3, MAP2K4/MKK4, MAP2K6/MKK6 and MAP2K7/MKK7, which activates the enzyme. Dephosphorylated by dual specificity phosphatase DUSP1.

The catalysed reaction is L-seryl-[protein] + ATP = O-phospho-L-seryl-[protein] + ADP + H(+). The enzyme catalyses L-threonyl-[protein] + ATP = O-phospho-L-threonyl-[protein] + ADP + H(+). With respect to regulation, activated by phosphorylation on threonine and tyrosine by dual specificity kinases, MAP2K3/MKK3, MAP2K6/MKK6, MAP2K4/MKK4 and MAP2K7/MKK7. Activation by ultraviolet radiation, hyperosmotic shock, anisomycin or by TNF-alpha is mediated by MAP2K3/MKK3. Inhibited by dual specificity phosphatase DUSP1. Serine/threonine kinase which acts as an essential component of the MAP kinase signal transduction pathway. MAPK13 is one of the four p38 MAPKs which play an important role in the cascades of cellular responses evoked by extracellular stimuli such as pro-inflammatory cytokines or physical stress leading to direct activation of transcription factors such as ELK1 and ATF2. Accordingly, p38 MAPKs phosphorylate a broad range of proteins and it has been estimated that they may have approximately 200 to 300 substrates each. MAPK13 is one of the less studied p38 MAPK isoforms. Some of the targets are downstream kinases such as MAPKAPK2, which are activated through phosphorylation and further phosphorylate additional targets. Plays a role in the regulation of protein translation by phosphorylating and inactivating EEF2K. Involved in cytoskeletal remodeling through phosphorylation of MAPT and STMN1. Mediates UV irradiation induced up-regulation of the gene expression of CXCL14. Plays an important role in the regulation of epidermal keratinocyte differentiation, apoptosis and skin tumor development. Phosphorylates the transcriptional activator MYB in response to stress which leads to rapid MYB degradation via a proteasome-dependent pathway. MAPK13 also phosphorylates and down-regulates PRKD1 during regulation of insulin secretion in pancreatic beta cells. This is Mitogen-activated protein kinase 13 (Mapk13) from Mus musculus (Mouse).